The sequence spans 164 residues: Putative 4-hydroxy-4-methyl-2-oxoglutarate aldolase (164 aa).

Residues 75–78 (GDML) and arginine 97 each bind substrate. A divalent metal cation is bound at residue aspartate 98.

The protein belongs to the class II aldolase/RraA-like family. In terms of assembly, homotrimer. A divalent metal cation is required as a cofactor.

The catalysed reaction is 4-hydroxy-4-methyl-2-oxoglutarate = 2 pyruvate. It carries out the reaction oxaloacetate + H(+) = pyruvate + CO2. Functionally, catalyzes the aldol cleavage of 4-hydroxy-4-methyl-2-oxoglutarate (HMG) into 2 molecules of pyruvate. Also contains a secondary oxaloacetate (OAA) decarboxylase activity due to the common pyruvate enolate transition state formed following C-C bond cleavage in the retro-aldol and decarboxylation reactions. The polypeptide is Putative 4-hydroxy-4-methyl-2-oxoglutarate aldolase (Hahella chejuensis (strain KCTC 2396)).